The sequence spans 211 residues: 3,4-dihydroxy-2-butanone 4-phosphate synthase (211 aa).

Residues 37–38 (RE), Asp42, 150–154 (RGGHT), and Glu174 each bind D-ribulose 5-phosphate. Residue Glu38 coordinates Mg(2+). His153 provides a ligand contact to Mg(2+).

It belongs to the DHBP synthase family. In terms of assembly, homodimer. Mg(2+) is required as a cofactor. Requires Mn(2+) as cofactor.

The catalysed reaction is D-ribulose 5-phosphate = (2S)-2-hydroxy-3-oxobutyl phosphate + formate + H(+). It participates in cofactor biosynthesis; riboflavin biosynthesis; 2-hydroxy-3-oxobutyl phosphate from D-ribulose 5-phosphate: step 1/1. Catalyzes the conversion of D-ribulose 5-phosphate to formate and 3,4-dihydroxy-2-butanone 4-phosphate. This Baumannia cicadellinicola subsp. Homalodisca coagulata protein is 3,4-dihydroxy-2-butanone 4-phosphate synthase.